A 370-amino-acid polypeptide reads, in one-letter code: Dual-specificity RNA methyltransferase RlmN (370 aa).

Catalysis depends on E93, which acts as the Proton acceptor. Positions 99 to 337 (AEGRGTLCVS…VTTVRKTRGD (239 aa)) constitute a Radical SAM core domain. An intrachain disulfide couples C106 to C343. [4Fe-4S] cluster-binding residues include C113, C117, and C120. S-adenosyl-L-methionine contacts are provided by residues 167 to 168 (GE), S199, 221 to 223 (SLH), and N300. The active-site S-methylcysteine intermediate is C343.

The protein belongs to the radical SAM superfamily. RlmN family. The cofactor is [4Fe-4S] cluster.

The protein localises to the cytoplasm. The enzyme catalyses adenosine(2503) in 23S rRNA + 2 reduced [2Fe-2S]-[ferredoxin] + 2 S-adenosyl-L-methionine = 2-methyladenosine(2503) in 23S rRNA + 5'-deoxyadenosine + L-methionine + 2 oxidized [2Fe-2S]-[ferredoxin] + S-adenosyl-L-homocysteine. It carries out the reaction adenosine(37) in tRNA + 2 reduced [2Fe-2S]-[ferredoxin] + 2 S-adenosyl-L-methionine = 2-methyladenosine(37) in tRNA + 5'-deoxyadenosine + L-methionine + 2 oxidized [2Fe-2S]-[ferredoxin] + S-adenosyl-L-homocysteine. Its function is as follows. Specifically methylates position 2 of adenine 2503 in 23S rRNA and position 2 of adenine 37 in tRNAs. m2A2503 modification seems to play a crucial role in the proofreading step occurring at the peptidyl transferase center and thus would serve to optimize ribosomal fidelity. The sequence is that of Dual-specificity RNA methyltransferase RlmN from Francisella tularensis subsp. tularensis (strain FSC 198).